We begin with the raw amino-acid sequence, 292 residues long: uncharacterized protein (292 aa).

Belongs to the glycosyltransferase 2 family. WaaE/KdtX subfamily.

This is an uncharacterized protein from Rickettsia typhi (strain ATCC VR-144 / Wilmington).